A 179-amino-acid chain; its full sequence is Large ribosomal subunit protein uL6 (179 aa).

It belongs to the universal ribosomal protein uL6 family. As to quaternary structure, part of the 50S ribosomal subunit.

In terms of biological role, this protein binds to the 23S rRNA, and is important in its secondary structure. It is located near the subunit interface in the base of the L7/L12 stalk, and near the tRNA binding site of the peptidyltransferase center. The chain is Large ribosomal subunit protein uL6 from Prochlorococcus marinus (strain MIT 9211).